A 512-amino-acid polypeptide reads, in one-letter code: Metal transporter Nramp4 (512 aa).

12 helical membrane passes run 52–72 (LWLF…PGNL), 80–100 (AIAG…GLLI), 129–149 (MVLW…EVIG), 161–181 (LVPL…FLFL), 189–209 (LEAV…WMFG), 235–255 (AVGI…SALV), 277–297 (IEST…TTVF), 323–343 (YGGG…AAGQ), 371–391 (ALIT…VFDS), 402–422 (WLNV…LCLV), 440–460 (ISWI…VDFF), and 468–488 (ILLV…LYLI).

This sequence belongs to the NRAMP (TC 2.A.55) family. Expressed in vascular tissues.

It is found in the vacuole membrane. In terms of biological role, vacuolar metal transporter involved in intracellular metal homeostasis. Can transport iron (Fe), manganese (Mn) and cadmium (Cd). Regulates metal accumulation under Fe starvation. Acts redundantly with NRAMP3 to mobilize vacuolar Fe and provide sufficient Fe during seed germination. In association with NRAMP3, required for optimal growth and photosynthesis under Mn deficiency. Exports Mn from vacuoles in leaf mesophyll cells, making Mn available for functional photosystem II in chloroplasts. This chain is Metal transporter Nramp4 (NRAMP4), found in Arabidopsis thaliana (Mouse-ear cress).